The primary structure comprises 69 residues: Large ribosomal subunit protein uL29 (69 aa).

It belongs to the universal ribosomal protein uL29 family.

This chain is Large ribosomal subunit protein uL29, found in Mycoplasmopsis agalactiae (strain NCTC 10123 / CIP 59.7 / PG2) (Mycoplasma agalactiae).